Here is a 503-residue protein sequence, read N- to C-terminus: Cytochrome P450 71B6 (503 aa).

Residues 10–30 (TELLPWLLLLLIPPLLIFFLL) traverse the membrane as a helical segment. Cys446 provides a ligand contact to heme.

This sequence belongs to the cytochrome P450 family. Heme serves as cofactor.

It is found in the membrane. The chain is Cytochrome P450 71B6 (CYP71B6) from Arabidopsis thaliana (Mouse-ear cress).